We begin with the raw amino-acid sequence, 188 residues long: NADH-quinone oxidoreductase subunit I 2 (188 aa).

2 4Fe-4S ferredoxin-type domains span residues 56 to 88 (HFLK…VVPY) and 98 to 127 (AKFE…LGQQ). Residues C68, C71, C74, C78, C107, C110, C113, and C117 each contribute to the [4Fe-4S] cluster site.

It belongs to the complex I 23 kDa subunit family. As to quaternary structure, NDH-1 is composed of 14 different subunits. Subunits NuoA, H, J, K, L, M, N constitute the membrane sector of the complex. Requires [4Fe-4S] cluster as cofactor.

It localises to the cell inner membrane. It carries out the reaction a quinone + NADH + 5 H(+)(in) = a quinol + NAD(+) + 4 H(+)(out). Its function is as follows. NDH-1 shuttles electrons from NADH, via FMN and iron-sulfur (Fe-S) centers, to quinones in the respiratory chain. The immediate electron acceptor for the enzyme in this species is believed to be ubiquinone. Couples the redox reaction to proton translocation (for every two electrons transferred, four hydrogen ions are translocated across the cytoplasmic membrane), and thus conserves the redox energy in a proton gradient. The chain is NADH-quinone oxidoreductase subunit I 2 from Rhizobium etli (strain ATCC 51251 / DSM 11541 / JCM 21823 / NBRC 15573 / CFN 42).